A 169-amino-acid chain; its full sequence is Probable GPI-anchored adhesin-like protein PGA22 (169 aa).

The first 18 residues, 1–18 (MKYSTLAWLVIASYTVFA), serve as a signal peptide directing secretion. Asn87, Asn104, Asn111, and Asn118 each carry an N-linked (GlcNAc...) asparagine glycan. The GPI-anchor amidated glycine moiety is linked to residue Gly140. Positions 141-169 (PALTTTTVAEAFSLAAGASLGYLVALLFL) are cleaved as a propeptide — removed in mature form.

The protein resides in the cell membrane. Putative adhesin which may be involved in cell adhesion and virulence. The sequence is that of Probable GPI-anchored adhesin-like protein PGA22 (PGA22) from Candida albicans (strain SC5314 / ATCC MYA-2876) (Yeast).